The primary structure comprises 273 residues: 2,3,4,5-tetrahydropyridine-2,6-dicarboxylate N-succinyltransferase (273 aa).

The substrate site is built by arginine 104 and aspartate 141.

Belongs to the transferase hexapeptide repeat family. Homotrimer.

The protein resides in the cytoplasm. The enzyme catalyses (S)-2,3,4,5-tetrahydrodipicolinate + succinyl-CoA + H2O = (S)-2-succinylamino-6-oxoheptanedioate + CoA. It participates in amino-acid biosynthesis; L-lysine biosynthesis via DAP pathway; LL-2,6-diaminopimelate from (S)-tetrahydrodipicolinate (succinylase route): step 1/3. The sequence is that of 2,3,4,5-tetrahydropyridine-2,6-dicarboxylate N-succinyltransferase from Blochmanniella pennsylvanica (strain BPEN).